The following is a 1073-amino-acid chain: Probable cellulose synthase A catalytic subunit 2 [UDP-forming] (1073 aa).

At 1–270 (MDGAKSGKQC…SSSRINPYRM (270 aa)) the chain is on the cytoplasmic side. Residues Cys13, Cys16, Cys32, Cys35, Cys40, Cys43, Cys55, and Cys58 each contribute to the Zn(2+) site. The segment at 13-59 (CQICGDGVGTAADGELFTACDVCGFPVCRPCYEYERKDGSQACPQCK) adopts an RING-type; degenerate zinc-finger fold. The tract at residues 66 to 98 (KGSPPILGDESDDVDADDASDVNYPTSGNQDHK) is disordered. Over residues 74–85 (DESDDVDADDAS) the composition is skewed to acidic residues. Residues 271–291 (VIVLRLIVLCIFLHYRITNPV) form a helical membrane-spanning segment. At 292 to 293 (RN) the chain is on the extracellular side. A helical membrane pass occupies residues 294 to 314 (AYPLWLLSVICEIWFALSWIL). The Cytoplasmic segment spans residues 315–856 (DQFPKWSPIN…INTTIYPLTS (542 aa)). 4 residues coordinate UDP-alpha-D-glucose: Ser353, Lys359, Glu360, and Asp389. Asp389 is an active-site residue. Residues 443 to 470 (VKDRRAMKREYEEFKVRVNALVAKAQKV) are a coiled coil. Residue Lys530 coordinates UDP-alpha-D-glucose. Lys531 and Asp555 together coordinate Mn(2+). The tract at residues 655-676 (GGRKKTKKSKEKSTEKKKSHKH) is disordered. Residue Asp773 is part of the active site. A helical transmembrane segment spans residues 857–877 (IPLLLYCILPAICLLTGKFII). The Extracellular segment spans residues 878–882 (PEISN). The helical transmembrane segment at 883–903 (FASIWFISLFLSIFATGILEM) threads the bilayer. At 904-918 (RWSGVGIDEWWRNEQ) the chain is on the cytoplasmic side. Residues 919 to 939 (FWVIGGISAHLFAVFQGLLKV) form a helical membrane-spanning segment. Over 940 to 969 (LAGIDTSFTVTSKASDEEGDFAELYMFKWT) the chain is Extracellular. A helical transmembrane segment spans residues 970 to 990 (TLLIPPTTILIINLVGVVAGI). Topologically, residues 991–1001 (SYAINSGYQSW) are cytoplasmic. A helical transmembrane segment spans residues 1002–1022 (GPLFGKLFFAFWVIVHLYPFL). At 1023–1031 (KGLMGRQNR) the chain is on the extracellular side. The helical transmembrane segment at 1032–1052 (TPTIVVVWAILLASIFSLLWV) threads the bilayer. At 1053 to 1073 (RIDPFTTRVTGPDTQKCGINC) the chain is on the cytoplasmic side.

It belongs to the glycosyltransferase 2 family. Plant cellulose synthase subfamily. It depends on Mn(2+) as a cofactor. Zn(2+) is required as a cofactor.

The protein resides in the cell membrane. It catalyses the reaction [(1-&gt;4)-beta-D-glucosyl](n) + UDP-alpha-D-glucose = [(1-&gt;4)-beta-D-glucosyl](n+1) + UDP + H(+). Its pathway is glycan metabolism; plant cellulose biosynthesis. Its function is as follows. Probable catalytic subunit of cellulose synthase terminal complexes ('rosettes'), required for beta-1,4-glucan microfibril crystallization, a major mechanism of the cell wall formation. This chain is Probable cellulose synthase A catalytic subunit 2 [UDP-forming] (CESA2), found in Oryza sativa subsp. japonica (Rice).